Consider the following 503-residue polypeptide: Cytosolic carboxypeptidase 6 (503 aa).

Positions 167–438 constitute a Peptidase M14 domain; the sequence is YPYTYTRFQH…NVARTFLDYY (272 aa). Zn(2+) is bound by residues His230, Glu233, and His328. Residue Glu401 is the Proton donor/acceptor of the active site. 2 stretches are compositionally biased toward basic and acidic residues: residues 459–469 and 487–503; these read IEVQRRKEKSP and KGDK…STPF. The tract at residues 459 to 503 is disordered; sequence IEVQRRKEKSPPYKHPLLRGPASNYPNSKGDKKSSVNHKDPSTPF.

It belongs to the peptidase M14 family. In terms of assembly, interacts with MYLK. Requires Zn(2+) as cofactor.

It localises to the cytoplasm. It is found in the cytosol. The protein localises to the cytoskeleton. The protein resides in the microtubule organizing center. Its subcellular location is the centrosome. It localises to the centriole. It is found in the golgi apparatus. The protein localises to the cilium basal body. The enzyme catalyses (L-glutamyl)(n+1)-gamma-L-glutamyl-L-glutamyl-[protein] + H2O = (L-glutamyl)(n)-gamma-L-glutamyl-L-glutamyl-[protein] + L-glutamate. The catalysed reaction is C-terminal L-alpha-aminoacyl-L-glutamyl-L-glutamyl-[tubulin] + H2O = C-terminal L-alpha-aminoacyl-L-glutamyl-[tubulin] + L-glutamate. In terms of biological role, metallocarboxypeptidase that mediates protein deglutamylation of tubulin and non-tubulin target proteins. Catalyzes the removal of polyglutamate side chains present on the gamma-carboxyl group of glutamate residues within the C-terminal tail of tubulin protein. Specifically cleaves tubulin long-side-chains, while it is not able to remove the branching point glutamate. Also catalyzes the removal of polyglutamate residues from the carboxy-terminus of non-tubulin proteins such as MYLK. Mediates the deglutamylation of nucleotidyltransferase CGAS, leading to CGAS antiviral defense response activation. Involved in KLF4 deglutamylation which promotes KLF4 proteasome-mediated degradation, thereby negatively regulating cell pluripotency maintenance and embryogenesis. The chain is Cytosolic carboxypeptidase 6 from Homo sapiens (Human).